Here is a 383-residue protein sequence, read N- to C-terminus: BRISC and BRCA1-A complex member 2 (383 aa).

At Met-1 the chain carries N-acetylmethionine. Ser-2 bears the Phosphoserine mark. UEV-like regions lie at residues 30–147 (DATN…TLLE) and 275–364 (IAAF…RAKA).

The protein belongs to the BABAM2 family. Component of the ARISC complex, at least composed of UIMC1/RAP80, ABRAXAS1, BRCC3/BRCC36, BABAM2 and BABAM1/NBA1. Component of the BRCA1-A complex, at least composed of BRCA1, BARD1, UIMC1/RAP80, ABRAXAS1, BRCC3/BRCC36, BABAM2 and BABAM1/NBA1. In the BRCA1-A complex, interacts directly with ABRAXAS1, BRCC3/BRCC36 and BABAM1/NBA1. Binds polyubiquitin. Component of the BRISC complex, at least composed of ABRAXAS2, BRCC3/BRCC36, BABAM2 and BABAM1/NBA1. Identified in a complex with SHMT2 and the other subunits of the BRISC complex. Component of the BRCA1/BRCA2 containing complex (BRCC), which also contains BRCA1, BRCA2, BARD1, BRCC3/BRCC36 and RAD51. BRCC is a ubiquitin E3 ligase complex that enhances cellular survival following DNA damage. May interact with FAS and TNFRSF1A.

It is found in the cytoplasm. The protein localises to the nucleus. Component of the BRCA1-A complex, a complex that specifically recognizes 'Lys-63'-linked ubiquitinated histones H2A and H2AX at DNA lesions sites, leading to target the BRCA1-BARD1 heterodimer to sites of DNA damage at double-strand breaks (DSBs). The BRCA1-A complex also possesses deubiquitinase activity that specifically removes 'Lys-63'-linked ubiquitin on histones H2A and H2AX. In the BRCA1-A complex, it acts as an adapter that bridges the interaction between BABAM1/NBA1 and the rest of the complex, thereby being required for the complex integrity and modulating the E3 ubiquitin ligase activity of the BRCA1-BARD1 heterodimer. Component of the BRISC complex, a multiprotein complex that specifically cleaves 'Lys-63'-linked ubiquitin in various substrates. Within the BRISC complex, acts as an adapter that bridges the interaction between BABAM1/NBA1 and the rest of the complex, thereby being required for the complex integrity. The BRISC complex is required for normal mitotic spindle assembly and microtubule attachment to kinetochores via its role in deubiquitinating NUMA1. The BRISC complex plays a role in interferon signaling via its role in the deubiquitination of the interferon receptor IFNAR1; deubiquitination increases IFNAR1 activity by enhancing its stability and cell surface expression. Down-regulates the response to bacterial lipopolysaccharide (LPS) via its role in IFNAR1 deubiquitination. May play a role in homeostasis or cellular differentiation in cells of neural, epithelial and germline origins. May also act as a death receptor-associated anti-apoptotic protein, which inhibits the mitochondrial apoptotic pathway. May regulate TNF-alpha signaling through its interactions with TNFRSF1A; however these effects may be indirect. In Rattus norvegicus (Rat), this protein is BRISC and BRCA1-A complex member 2.